Consider the following 416-residue polypeptide: N-carbamoyl-L-amino-acid amidohydrolase (416 aa).

Residues H87, D98, E133, and H194 each contribute to the a divalent metal cation site. The an N-carbamoyl-L-alpha-amino acid site is built by Q197, H230, N279, R292, and G361. The involved in dimerization stretch occupies residues 213 to 331 (HCQGLWWLEF…SIEAVGHFDP (119 aa)). An a divalent metal cation-binding site is contributed by H386.

Belongs to the peptidase M20 family. Homodimer. Requires Mn(2+) as cofactor. It depends on Ni(2+) as a cofactor. Co(2+) is required as a cofactor. The cofactor is Fe(2+).

The catalysed reaction is an N-carbamoyl-L-alpha-amino acid + H2O + 2 H(+) = an L-alpha-amino acid + NH4(+) + CO2. The enzyme catalyses N-carbamoyl-L-methionine + H2O + 2 H(+) = L-methionine + NH4(+) + CO2. It catalyses the reaction N-acetyl-L-methionine + H2O = L-methionine + acetate. It carries out the reaction N(alpha)-formyl-L-methionine + H2O = formate + L-methionine. The catalysed reaction is N-carbamoyl-L-alanine + H2O + 2 H(+) = L-alanine + NH4(+) + CO2. The enzyme catalyses N-carbamoyl-L-cysteine + H2O + 2 H(+) = L-cysteine + NH4(+) + CO2. It catalyses the reaction N-carbamoyl-L-tryptophan + H2O + 2 H(+) = L-tryptophan + NH4(+) + CO2. It carries out the reaction N-carbamoyl-L-valine + H2O + 2 H(+) = L-valine + NH4(+) + CO2. The catalysed reaction is N-carbamoyl-L-phenylalanine + H2O + 2 H(+) = L-phenylalanine + NH4(+) + CO2. Strongly inhibited by Hg(2+), Cu(2+), Zn(2+), Pb(2+) and Fe(3+) ions, and slightly inhibited by Na(+) and K(+) ions. Beta-mercaptoethanol and 5,5'-dithiobis-(2-nitrobenzoic acid)(DTNB) cause 34% and 42% inhibition, respectively. Its function is as follows. Catalyzes the hydrolysis of both aliphatic and aromatic N-carbamoyl-L-alpha-amino acids to free L-alpha-amino acids. Is strictly L-specific since it is inactive toward N-carbamoyl-D-alpha-amino acids. Is also able to hydrolyze N-formyl-L-methionine and N-acetyl-L-methionine, but not ureidosuccinate or 3-ureidopropanoate. This chain is N-carbamoyl-L-amino-acid amidohydrolase, found in Rhizobium meliloti (Ensifer meliloti).